The primary structure comprises 476 residues: Argininosuccinate lyase (476 aa).

Belongs to the lyase 1 family. Argininosuccinate lyase subfamily.

The protein resides in the cytoplasm. It carries out the reaction 2-(N(omega)-L-arginino)succinate = fumarate + L-arginine. It functions in the pathway amino-acid biosynthesis; L-arginine biosynthesis; L-arginine from L-ornithine and carbamoyl phosphate: step 3/3. This chain is Argininosuccinate lyase, found in Leptothrix cholodnii (strain ATCC 51168 / LMG 8142 / SP-6) (Leptothrix discophora (strain SP-6)).